The sequence spans 247 residues: 1-(5-phosphoribosyl)-5-[(5-phosphoribosylamino)methylideneamino] imidazole-4-carboxamide isomerase 2 (247 aa).

The active-site Proton acceptor is glutamate 8. The active-site Proton donor is aspartate 128.

Belongs to the HisA/HisF family.

It localises to the cytoplasm. The catalysed reaction is 1-(5-phospho-beta-D-ribosyl)-5-[(5-phospho-beta-D-ribosylamino)methylideneamino]imidazole-4-carboxamide = 5-[(5-phospho-1-deoxy-D-ribulos-1-ylimino)methylamino]-1-(5-phospho-beta-D-ribosyl)imidazole-4-carboxamide. It participates in amino-acid biosynthesis; L-histidine biosynthesis; L-histidine from 5-phospho-alpha-D-ribose 1-diphosphate: step 4/9. This Ruegeria pomeroyi (strain ATCC 700808 / DSM 15171 / DSS-3) (Silicibacter pomeroyi) protein is 1-(5-phosphoribosyl)-5-[(5-phosphoribosylamino)methylideneamino] imidazole-4-carboxamide isomerase 2.